Here is a 212-residue protein sequence, read N- to C-terminus: Imidazole glycerol phosphate synthase subunit HisH (212 aa).

The Glutamine amidotransferase type-1 domain maps to 3–212 (DVAIIDYGMG…MLANFISWAP (210 aa)). The active-site Nucleophile is Cys-82. Residues His-192 and Glu-194 contribute to the active site.

As to quaternary structure, heterodimer of HisH and HisF.

It is found in the cytoplasm. It catalyses the reaction 5-[(5-phospho-1-deoxy-D-ribulos-1-ylimino)methylamino]-1-(5-phospho-beta-D-ribosyl)imidazole-4-carboxamide + L-glutamine = D-erythro-1-(imidazol-4-yl)glycerol 3-phosphate + 5-amino-1-(5-phospho-beta-D-ribosyl)imidazole-4-carboxamide + L-glutamate + H(+). The enzyme catalyses L-glutamine + H2O = L-glutamate + NH4(+). Its pathway is amino-acid biosynthesis; L-histidine biosynthesis; L-histidine from 5-phospho-alpha-D-ribose 1-diphosphate: step 5/9. Functionally, IGPS catalyzes the conversion of PRFAR and glutamine to IGP, AICAR and glutamate. The HisH subunit catalyzes the hydrolysis of glutamine to glutamate and ammonia as part of the synthesis of IGP and AICAR. The resulting ammonia molecule is channeled to the active site of HisF. This Aromatoleum aromaticum (strain DSM 19018 / LMG 30748 / EbN1) (Azoarcus sp. (strain EbN1)) protein is Imidazole glycerol phosphate synthase subunit HisH.